Reading from the N-terminus, the 327-residue chain is Ribose-phosphate pyrophosphokinase (327 aa).

Residues 40–42 and 99–100 contribute to the ATP site; these read DGE and RQ. Positions 134 and 173 each coordinate Mg(2+). Residue lysine 196 is part of the active site. Residues arginine 198, aspartate 222, and 226–230 contribute to the D-ribose 5-phosphate site; that span reads DTANT.

This sequence belongs to the ribose-phosphate pyrophosphokinase family. Class I subfamily. In terms of assembly, homohexamer. Requires Mg(2+) as cofactor.

It localises to the cytoplasm. The catalysed reaction is D-ribose 5-phosphate + ATP = 5-phospho-alpha-D-ribose 1-diphosphate + AMP + H(+). It participates in metabolic intermediate biosynthesis; 5-phospho-alpha-D-ribose 1-diphosphate biosynthesis; 5-phospho-alpha-D-ribose 1-diphosphate from D-ribose 5-phosphate (route I): step 1/1. In terms of biological role, involved in the biosynthesis of the central metabolite phospho-alpha-D-ribosyl-1-pyrophosphate (PRPP) via the transfer of pyrophosphoryl group from ATP to 1-hydroxyl of ribose-5-phosphate (Rib-5-P). The polypeptide is Ribose-phosphate pyrophosphokinase (Chromobacterium violaceum (strain ATCC 12472 / DSM 30191 / JCM 1249 / CCUG 213 / NBRC 12614 / NCIMB 9131 / NCTC 9757 / MK)).